Reading from the N-terminus, the 138-residue chain is Large ribosomal subunit protein uL16 (138 aa).

Basic residues predominate over residues 1-15 (MLSPRKVKYRKKQRG). The tract at residues 1-21 (MLSPRKVKYRKKQRGRLSGEA) is disordered.

Belongs to the universal ribosomal protein uL16 family. Part of the 50S ribosomal subunit.

In terms of biological role, binds 23S rRNA and is also seen to make contacts with the A and possibly P site tRNAs. The polypeptide is Large ribosomal subunit protein uL16 (Borrelia duttonii (strain Ly)).